The chain runs to 380 residues: MAFALRGVTAKASGRTAGARSSGRTLTVRVQAYGMAAEYIWADGNEGKPEKGMIFNEMRSKTKCFEAPLGLDASEYPDWSFDGSSTGQAEGNNSDCILRPVRVVTDPIRGAPHVLVMCEVFAPDGKPHSTNTRAKLREIIDDKVTAEDCWYGFEQEYTMLAKTSGHIYGWPAGGFPAPQGPFYCGVGAESAFGRPLAEAHMEACMKAGLVISGINAEVMPGQWEYQIGPVGPLALGDEVMLSRWLLHRLGEDFGIVSTFNPKPVRTGDWNGTGAHTNFSTKGMRVPGGMKVIEEAVEKLSKTHIEHITQYGIGNEARLTGKHETCDINTFKHGVADRGSSIRIPLPVMLKGYGYLEDRRPAANVDPYTVARLLIKTVLKG.

The GS beta-grasp domain maps to 35–125 (MAAEYIWADG…VMCEVFAPDG (91 aa)). One can recognise a GS catalytic domain in the interval 132-380 (TRAKLREIID…RLLIKTVLKG (249 aa)).

It belongs to the glutamine synthetase family. In terms of assembly, homooctamer.

The protein resides in the plastid. It localises to the chloroplast. It catalyses the reaction L-glutamate + NH4(+) + ATP = L-glutamine + ADP + phosphate + H(+). This Chlamydomonas reinhardtii (Chlamydomonas smithii) protein is Glutamine synthetase, chloroplastic (GLN2).